Reading from the N-terminus, the 73-residue chain is Large ribosomal subunit protein bL31 (73 aa).

It belongs to the bacterial ribosomal protein bL31 family. Type A subfamily. As to quaternary structure, part of the 50S ribosomal subunit.

In terms of biological role, binds the 23S rRNA. This is Large ribosomal subunit protein bL31 from Bartonella henselae (strain ATCC 49882 / DSM 28221 / CCUG 30454 / Houston 1) (Rochalimaea henselae).